A 605-amino-acid chain; its full sequence is Poly [ADP-ribose] polymerase 2-B (605 aa).

Residues 96–122 form a disordered region; it reads NAAAAAAVTDGGDQDKTKSAKDDDGDD. A compositionally biased stretch (basic and acidic residues) spans 108-122; that stretch reads DQDKTKSAKDDDGDD. In terms of domain architecture, WGR spans 153 to 260; sequence AYHVLQVGDE…TKLETRTASF (108 aa). Residues 250-370 enclose the PARP alpha-helical domain; the sequence is ETKLETRTAS…EIEIAIKLLE (121 aa). The PARP catalytic domain maps to 378 to 605; it reads HPLYARYKQF…NVNFNFKRWG (228 aa).

Belongs to the ARTD/PARP family.

It localises to the nucleus. The enzyme catalyses NAD(+) + (ADP-D-ribosyl)n-acceptor = nicotinamide + (ADP-D-ribosyl)n+1-acceptor + H(+).. It catalyses the reaction L-aspartyl-[protein] + NAD(+) = 4-O-(ADP-D-ribosyl)-L-aspartyl-[protein] + nicotinamide. It carries out the reaction L-glutamyl-[protein] + NAD(+) = 5-O-(ADP-D-ribosyl)-L-glutamyl-[protein] + nicotinamide. Its function is as follows. Involved in the base excision repair (BER) pathway, by catalyzing the poly(ADP-ribosyl)ation of a limited number of acceptor proteins involved in chromatin architecture and in DNA metabolism. This modification follows DNA damages and appears as an obligatory step in a detection/signaling pathway leading to the reparation of DNA strand breaks. The chain is Poly [ADP-ribose] polymerase 2-B (PARP2-B) from Oryza sativa subsp. japonica (Rice).